A 625-amino-acid polypeptide reads, in one-letter code: Low affinity potassium transport system protein Kup (625 aa).

A run of 12 helical transmembrane segments spans residues 15–35, 58–78, 103–123, 140–160, 171–191, 218–238, 251–271, 282–302, 340–360, 366–386, 396–416, and 422–442; these read TIFS…IYII, IIFW…IVSI, FVIV…IIII, LSFE…LFFI, IFSF…LKGI, FFVF…YINI, LFFV…IILL, FLVP…ISII, IYIP…ISIF, LILI…FFSL, FKIL…FIFI, and IICG…IMIT.

Belongs to the HAK/KUP transporter (TC 2.A.72) family.

It is found in the cell membrane. The enzyme catalyses K(+)(in) + H(+)(in) = K(+)(out) + H(+)(out). Its function is as follows. Responsible for the low-affinity transport of potassium into the cell. Likely operates as a K(+):H(+) symporter. The polypeptide is Low affinity potassium transport system protein Kup (Wigglesworthia glossinidia brevipalpis).